Consider the following 396-residue polypeptide: Purine ribonucleoside efflux pump NepI (396 aa).

Topologically, residues 1-21 (MSEFIAENRGADAITRPNWSA) are cytoplasmic. Residues 22–42 (VFSVAFCVACLIIVEFLPVSL) form a helical membrane-spanning segment. Residues 43–54 (LTPMAQDLGISE) are Periplasmic-facing. Residues 55–75 (GVAGQSVTVTAFVAMFASLFI) form a helical membrane-spanning segment. The Cytoplasmic portion of the chain corresponds to 76–85 (TQTIQATDRC). A helical membrane pass occupies residues 86 to 106 (YVVILFAVLLTLSCLLVSFAN). Position 107 (S107) is a topological domain, periplasmic. The chain crosses the membrane as a helical span at residues 108–128 (FSLLLIGRACLGLALGGFWAM). Residues 129–147 (SASLTMRLVPPRTVPKALS) are Cytoplasmic-facing. A helical transmembrane segment spans residues 148-168 (VIFGAVSIALVIAAPLGSFLG). The Periplasmic portion of the chain corresponds to 169–175 (ELIGWRN). A helical transmembrane segment spans residues 176–196 (VFNAAAVMGVLCIFWIIKSLP). At 197–215 (SLPGEPSHQKQNTFRLLQR) the chain is on the cytoplasmic side. Residues 216–236 (PGVMAGMIAIFMSFAGQFAFF) form a helical membrane-spanning segment. The Periplasmic portion of the chain corresponds to 237-255 (TYIRPVYMNLAGFGVDGLT). A helical transmembrane segment spans residues 256 to 276 (LVLLSFGIASFIGTSLSSFIL). Topologically, residues 277–281 (KRSVK) are cytoplasmic. Residues 282 to 302 (LALAGAPLILAVSALVLTLWG) form a helical membrane-spanning segment. Residues 303-305 (SDK) lie on the Periplasmic side of the membrane. Residues 306 to 326 (IVATGVAIIWGLTFALVPVGW) traverse the membrane as a helical segment. Over 327–343 (STWITRSLADQAEKAGS) the chain is Cytoplasmic. The chain crosses the membrane as a helical span at residues 344–364 (IQVAVIQLANTCGAAIGGYAL). Residues 365–366 (DN) are Periplasmic-facing. The chain crosses the membrane as a helical span at residues 367–387 (IGLTSPLMLSGTLMLLTALLV). Residues 388-396 (TAKVKMKKS) are Cytoplasmic-facing.

It belongs to the major facilitator superfamily. DHA1 family. NepI (TC 2.A.1.2.26) subfamily.

The protein resides in the cell inner membrane. The enzyme catalyses inosine(in) + H(+)(out) = inosine(out) + H(+)(in). The catalysed reaction is guanosine(in) + H(+)(out) = guanosine(out) + H(+)(in). Its function is as follows. Involved in the efflux of purine ribonucleosides, such as inosine and guanosine. The protein is Purine ribonucleoside efflux pump NepI of Shigella boydii serotype 4 (strain Sb227).